We begin with the raw amino-acid sequence, 424 residues long: Homeobox-containing protein 1 (424 aa).

The 30-residue stretch at 1–30 (MLFTIEQLELIKKLQHTGMSSDQLLKAFGE) folds into the HNF-p1 domain. In terms of domain architecture, POU-specific atypical spans 103–199 (SQRTPMKEIT…PNKLAAFLAD (97 aa)). Positions 215 to 291 (QRRERYVFRP…NKRKELRRRS (77 aa)) form a DNA-binding region, homeobox. The disordered stretch occupies residues 291–345 (SAEASAASTSSASSSASSTANHDSVSVSSMSPRDEETSSRNTTPETAISPSPAVS). Residues 293–310 (EASAASTSSASSSASSTA) show a composition bias toward low complexity. 2 stretches are compositionally biased toward polar residues: residues 311-321 (NHDSVSVSSMS) and 329-345 (SRNT…PAVS).

Belongs to the HMBOX1 homeobox family. Expressed in both AWC neurons. Also expressed in the FLP mechanosensory neurons.

The protein resides in the nucleus. Transcriptional repressor which maintains cell fate asymmetry of AWC neurons in adults by repressing the expression of multiple AWC (OFF) genes, including srsx-3 in the AWC (ON) neuron. In Caenorhabditis elegans, this protein is Homeobox-containing protein 1.